Reading from the N-terminus, the 545-residue chain is T-complex protein 1 subunit gamma (545 aa).

Residue Met1 is modified to N-acetylmethionine. Residues Met1 to Ser24 are disordered. The residue at position 11 (Ser11) is a Phosphoserine. A Glycyl lysine isopeptide (Lys-Gly) (interchain with G-Cter in SUMO2) cross-link involves residue Lys15. Gly42 provides a ligand contact to ADP. Gly42 is a binding site for ATP. A Mg(2+)-binding site is contributed by Asp93. Positions 94, 95, 96, 97, 162, and 163 each coordinate ADP. Positions 94, 95, and 96 each coordinate ATP. The residue at position 170 (Ser170) is a Phosphoserine. The residue at position 222 (Lys222) is an N6-acetyllysine. 2 positions are modified to phosphoserine: Ser243 and Ser244. Tyr247 is subject to Phosphotyrosine. Glycyl lysine isopeptide (Lys-Gly) (interchain with G-Cter in SUMO2) cross-links involve residues Lys248 and Lys249. Position 252 is a phosphoserine (Ser252). Residues Cys366 and Cys372 are joined by a disulfide bond. Lys381 is covalently cross-linked (Glycyl lysine isopeptide (Lys-Gly) (interchain with G-Cter in SUMO2)). Gly411 lines the ADP pocket. Gly411 contributes to the ATP binding site. A phosphothreonine mark is found at Thr430 and Thr459. Residues Gly482, Glu483, Glu497, and Lys502 each coordinate ADP. Gly482 lines the ATP pocket. Glu497 contributes to the ATP binding site. The interval His526–Glu545 is disordered.

It belongs to the TCP-1 chaperonin family. In terms of assembly, component of the chaperonin-containing T-complex (TRiC), a hexadecamer composed of two identical back-to-back stacked rings enclosing a protein folding chamber. Each ring is made up of eight different subunits: TCP1/CCT1, CCT2, CCT3, CCT4, CCT5, CCT6A/CCT6, CCT7, CCT8. Interacts with PACRG. Interacts with DNAAF4. Interacts with DLEC1. In terms of processing, the N-terminus is blocked.

The protein resides in the cytoplasm. The catalysed reaction is ATP + H2O = ADP + phosphate + H(+). Its function is as follows. Component of the chaperonin-containing T-complex (TRiC), a molecular chaperone complex that assists the folding of actin, tubulin and other proteins upon ATP hydrolysis. The TRiC complex mediates the folding of WRAP53/TCAB1, thereby regulating telomere maintenance. As part of the TRiC complex may play a role in the assembly of BBSome, a complex involved in ciliogenesis regulating transports vesicles to the cilia. This is T-complex protein 1 subunit gamma (Cct3) from Mus musculus (Mouse).